The primary structure comprises 465 residues: Methylenetetrahydrofolate--tRNA-(uracil-5-)-methyltransferase TrmFO (465 aa).

Residue 3-8 participates in FAD binding; it reads GAGLAG.

Belongs to the MnmG family. TrmFO subfamily. The cofactor is FAD.

Its subcellular location is the cytoplasm. The catalysed reaction is uridine(54) in tRNA + (6R)-5,10-methylene-5,6,7,8-tetrahydrofolate + NADH + H(+) = 5-methyluridine(54) in tRNA + (6S)-5,6,7,8-tetrahydrofolate + NAD(+). The enzyme catalyses uridine(54) in tRNA + (6R)-5,10-methylene-5,6,7,8-tetrahydrofolate + NADPH + H(+) = 5-methyluridine(54) in tRNA + (6S)-5,6,7,8-tetrahydrofolate + NADP(+). Functionally, catalyzes the folate-dependent formation of 5-methyl-uridine at position 54 (M-5-U54) in all tRNAs. The sequence is that of Methylenetetrahydrofolate--tRNA-(uracil-5-)-methyltransferase TrmFO from Bradyrhizobium sp. (strain ORS 278).